A 266-amino-acid polypeptide reads, in one-letter code: Glucosamine-6-phosphate deaminase (266 aa).

Catalysis depends on Asp72, which acts as the Proton acceptor; for enolization step. Asp141 (for ring-opening step) is an active-site residue. Residue His143 is the Proton acceptor; for ring-opening step of the active site. Catalysis depends on Glu148, which acts as the For ring-opening step.

It belongs to the glucosamine/galactosamine-6-phosphate isomerase family. NagB subfamily. Homohexamer.

The enzyme catalyses alpha-D-glucosamine 6-phosphate + H2O = beta-D-fructose 6-phosphate + NH4(+). It functions in the pathway amino-sugar metabolism; N-acetylneuraminate degradation; D-fructose 6-phosphate from N-acetylneuraminate: step 5/5. With respect to regulation, allosterically activated by N-acetylglucosamine 6-phosphate (GlcNAc6P). Functionally, catalyzes the reversible isomerization-deamination of glucosamine 6-phosphate (GlcN6P) to form fructose 6-phosphate (Fru6P) and ammonium ion. This chain is Glucosamine-6-phosphate deaminase, found in Enterobacter sp. (strain 638).